The following is a 454-amino-acid chain: Bifunctional protein GlmU (454 aa).

The interval 1-226 (MTTTVIILAA…AFEVEGVNDR (226 aa)) is pyrophosphorylase. UDP-N-acetyl-alpha-D-glucosamine contacts are provided by residues 8–11 (LAAG), Lys22, Gln73, 78–79 (GT), 100–102 (YGD), Gly137, Glu151, Asn166, and Asn224. Asp102 contacts Mg(2+). Asn224 contacts Mg(2+). Positions 227-247 (LQLAALEREFQLQQAKSLMQQ) are linker. Residues 248–454 (GVTLTDPSRF…NYQRPQKLKK (207 aa)) form an N-acetyltransferase region. UDP-N-acetyl-alpha-D-glucosamine is bound by residues Arg330 and Lys348. Catalysis depends on His360, which acts as the Proton acceptor. Residues Tyr363 and Asn374 each coordinate UDP-N-acetyl-alpha-D-glucosamine. Residues Ala377, 383-384 (NY), Ser402, Ala420, and Arg437 contribute to the acetyl-CoA site.

This sequence in the N-terminal section; belongs to the N-acetylglucosamine-1-phosphate uridyltransferase family. The protein in the C-terminal section; belongs to the transferase hexapeptide repeat family. In terms of assembly, homotrimer. The cofactor is Mg(2+).

The protein resides in the cytoplasm. It carries out the reaction alpha-D-glucosamine 1-phosphate + acetyl-CoA = N-acetyl-alpha-D-glucosamine 1-phosphate + CoA + H(+). It catalyses the reaction N-acetyl-alpha-D-glucosamine 1-phosphate + UTP + H(+) = UDP-N-acetyl-alpha-D-glucosamine + diphosphate. It functions in the pathway nucleotide-sugar biosynthesis; UDP-N-acetyl-alpha-D-glucosamine biosynthesis; N-acetyl-alpha-D-glucosamine 1-phosphate from alpha-D-glucosamine 6-phosphate (route II): step 2/2. Its pathway is nucleotide-sugar biosynthesis; UDP-N-acetyl-alpha-D-glucosamine biosynthesis; UDP-N-acetyl-alpha-D-glucosamine from N-acetyl-alpha-D-glucosamine 1-phosphate: step 1/1. It participates in bacterial outer membrane biogenesis; LPS lipid A biosynthesis. In terms of biological role, catalyzes the last two sequential reactions in the de novo biosynthetic pathway for UDP-N-acetylglucosamine (UDP-GlcNAc). The C-terminal domain catalyzes the transfer of acetyl group from acetyl coenzyme A to glucosamine-1-phosphate (GlcN-1-P) to produce N-acetylglucosamine-1-phosphate (GlcNAc-1-P), which is converted into UDP-GlcNAc by the transfer of uridine 5-monophosphate (from uridine 5-triphosphate), a reaction catalyzed by the N-terminal domain. The polypeptide is Bifunctional protein GlmU (Acinetobacter baylyi (strain ATCC 33305 / BD413 / ADP1)).